The sequence spans 88 residues: MAHKKGLGSSKNGRDSNAQRLGVKAFGGQVVTGGSIIVRQRGTRLKPGQNVGRGSDDTLFALIDGKVKFVDRGRMGRFVAVEPVEAAQ.

Belongs to the bacterial ribosomal protein bL27 family.

This is Large ribosomal subunit protein bL27 from Acidobacterium capsulatum (strain ATCC 51196 / DSM 11244 / BCRC 80197 / JCM 7670 / NBRC 15755 / NCIMB 13165 / 161).